We begin with the raw amino-acid sequence, 86 residues long: Large ribosomal subunit protein bL31 (86 aa).

It belongs to the bacterial ribosomal protein bL31 family. Type A subfamily. In terms of assembly, part of the 50S ribosomal subunit.

In terms of biological role, binds the 23S rRNA. This Parasynechococcus marenigrum (strain WH8102) protein is Large ribosomal subunit protein bL31.